Here is a 348-residue protein sequence, read N- to C-terminus: Rhodopsin (348 aa).

At Met-1 the chain carries N-acetylmethionine. The Extracellular portion of the chain corresponds to 1–36; sequence MNGTEGPNFYVPFSNKTGVVRSPFEYPQYYLAEPWQ. N-linked (GlcNAc...) asparagine glycans are attached at residues Asn-2 and Asn-15. A helical membrane pass occupies residues 37-61; that stretch reads FSMLAAYMFLLIVLGFPINFLTLYV. Residues 62–73 are Cytoplasmic-facing; it reads TVQHKKLRTPLN. A helical membrane pass occupies residues 74–96; sequence YILLNLAVADLFMVFGGFTTTLY. At 97–110 the chain is on the extracellular side; sequence TSLHGYFVFGPTGC. An intrachain disulfide couples Cys-110 to Cys-187. The helical transmembrane segment at 111–133 threads the bilayer; the sequence is NVEGFFATLGGEIALWSLVVLAI. A 'Ionic lock' involved in activated form stabilization motif is present at residues 134-136; sequence ERY. The Cytoplasmic segment spans residues 134 to 152; that stretch reads ERYVVVCKPMSNFRFGENH. A helical membrane pass occupies residues 153-173; it reads AIMGVAFTWVMALACAAPPLA. Topologically, residues 174 to 202 are extracellular; it reads GWSRYIPEGMQCSCGIDYYTLKPEVNNES. Glu-201 lines the Zn(2+) pocket. A helical transmembrane segment spans residues 203–224; the sequence is FVIYMFVVHFTIPMIVIFFCYG. Residues 225–252 are Cytoplasmic-facing; it reads QLVFTVKEAAAQQQESATTQKAEKEVTR. The helical transmembrane segment at 253–274 threads the bilayer; sequence MVIIMVIAFLICWVPYASVAFY. Residues 275–286 are Extracellular-facing; that stretch reads IFTHQGSNFGPI. Residue Gln-279 participates in Zn(2+) binding. Residues 287 to 308 form a helical membrane-spanning segment; sequence FMTLPAFFAKSASIYNPVIYIM. Lys-296 carries the post-translational modification N6-(retinylidene)lysine. Over 309–348 the chain is Cytoplasmic; it reads MNKQFRNCMLTTICCGKNPFAEEEGATTVSKTETSQVAPA. S-palmitoyl cysteine attachment occurs at residues Cys-322 and Cys-323. The segment at 330–348 is interaction with SAG; sequence EEEGATTVSKTETSQVAPA. A phosphothreonine mark is found at Thr-335 and Thr-336. Ser-338 carries the phosphoserine modification. Phosphothreonine occurs at positions 340 and 342. Ser-343 carries the phosphoserine modification.

The protein belongs to the G-protein coupled receptor 1 family. Opsin subfamily. As to quaternary structure, homodimer. May form a complex composed of RHO, GRK1 and RCVRN in a Ca(2+)-dependent manner; RCVRN prevents the interaction between GRK1 and RHO. Interacts with GRK1. Interacts (phosphorylated form) with SAG. Interacts with GNAT1. Interacts with GNAT3. SAG and G-proteins compete for a common binding site. Interacts with PRCD; the interaction promotes PRCD stability. Forms a complex with ASAP1 and ARF4. Forms a complex with ASAP1, RAB11A, Rabin8/RAB3IP, ARF4 and RAB11FIP3; the complex regulates Golgi-to-cilia rhodopsin/RHO transport in photoreceptors. In terms of processing, phosphorylated on some or all of the serine and threonine residues present in the C-terminal region. Post-translationally, contains one covalently linked retinal chromophore. Upon light absorption, the covalently bound 11-cis-retinal is converted to all-trans-retinal. After hydrolysis of the Schiff base and release of the covalently bound all-trans-retinal, active rhodopsin is regenerated by binding of a fresh molecule of 11-cis-retinal.

It localises to the membrane. The protein localises to the cell projection. The protein resides in the cilium. Its subcellular location is the photoreceptor outer segment. Photoreceptor required for image-forming vision at low light intensity. Required for photoreceptor cell viability after birth. Light-induced isomerization of 11-cis to all-trans retinal triggers a conformational change that activates signaling via G-proteins. Subsequent receptor phosphorylation mediates displacement of the bound G-protein alpha subunit by the arrestin SAG and terminates signaling. In Trichechus manatus (Caribbean manatee), this protein is Rhodopsin (RHO).